We begin with the raw amino-acid sequence, 172 residues long: Large ribosomal subunit protein uL10 (172 aa).

It belongs to the universal ribosomal protein uL10 family. As to quaternary structure, part of the ribosomal stalk of the 50S ribosomal subunit. The N-terminus interacts with L11 and the large rRNA to form the base of the stalk. The C-terminus forms an elongated spine to which L12 dimers bind in a sequential fashion forming a multimeric L10(L12)X complex.

In terms of biological role, forms part of the ribosomal stalk, playing a central role in the interaction of the ribosome with GTP-bound translation factors. The chain is Large ribosomal subunit protein uL10 from Beijerinckia indica subsp. indica (strain ATCC 9039 / DSM 1715 / NCIMB 8712).